A 94-amino-acid chain; its full sequence is Small ribosomal subunit protein bS20c (94 aa).

Belongs to the bacterial ribosomal protein bS20 family.

The protein localises to the plastid. It localises to the chloroplast. In terms of biological role, binds directly to 16S ribosomal RNA. This chain is Small ribosomal subunit protein bS20c, found in Porphyra purpurea (Red seaweed).